A 365-amino-acid chain; its full sequence is Peptide chain release factor 2 (365 aa).

Q252 carries the post-translational modification N5-methylglutamine.

It belongs to the prokaryotic/mitochondrial release factor family. Post-translationally, methylated by PrmC. Methylation increases the termination efficiency of RF2.

The protein resides in the cytoplasm. Functionally, peptide chain release factor 2 directs the termination of translation in response to the peptide chain termination codons UGA and UAA. This is Peptide chain release factor 2 from Colwellia psychrerythraea (strain 34H / ATCC BAA-681) (Vibrio psychroerythus).